A 175-amino-acid chain; its full sequence is ATP synthase subunit b (175 aa).

The chain crosses the membrane as a helical span at residues leucine 22 to leucine 42.

It belongs to the ATPase B chain family. F-type ATPases have 2 components, F(1) - the catalytic core - and F(0) - the membrane proton channel. F(1) has five subunits: alpha(3), beta(3), gamma(1), delta(1), epsilon(1). F(0) has four main subunits: a(1), b(1), b'(1) and c(10-14). The alpha and beta chains form an alternating ring which encloses part of the gamma chain. F(1) is attached to F(0) by a central stalk formed by the gamma and epsilon chains, while a peripheral stalk is formed by the delta, b and b' chains.

The protein localises to the cell inner membrane. F(1)F(0) ATP synthase produces ATP from ADP in the presence of a proton or sodium gradient. F-type ATPases consist of two structural domains, F(1) containing the extramembraneous catalytic core and F(0) containing the membrane proton channel, linked together by a central stalk and a peripheral stalk. During catalysis, ATP synthesis in the catalytic domain of F(1) is coupled via a rotary mechanism of the central stalk subunits to proton translocation. Functionally, component of the F(0) channel, it forms part of the peripheral stalk, linking F(1) to F(0). In Gloeobacter violaceus (strain ATCC 29082 / PCC 7421), this protein is ATP synthase subunit b.